The primary structure comprises 310 residues: Pantothenate kinase (310 aa).

Residue glycine 95–serine 102 coordinates ATP.

This sequence belongs to the prokaryotic pantothenate kinase family.

The protein resides in the cytoplasm. It catalyses the reaction (R)-pantothenate + ATP = (R)-4'-phosphopantothenate + ADP + H(+). It functions in the pathway cofactor biosynthesis; coenzyme A biosynthesis; CoA from (R)-pantothenate: step 1/5. The protein is Pantothenate kinase of Mycobacteroides abscessus (strain ATCC 19977 / DSM 44196 / CCUG 20993 / CIP 104536 / JCM 13569 / NCTC 13031 / TMC 1543 / L948) (Mycobacterium abscessus).